The chain runs to 324 residues: N-acetyl-gamma-glutamyl-phosphate reductase (324 aa).

The active site involves cysteine 131.

It belongs to the NAGSA dehydrogenase family. Type 1 subfamily.

It is found in the cytoplasm. The enzyme catalyses N-acetyl-L-glutamate 5-semialdehyde + phosphate + NADP(+) = N-acetyl-L-glutamyl 5-phosphate + NADPH + H(+). It participates in amino-acid biosynthesis; L-arginine biosynthesis; N(2)-acetyl-L-ornithine from L-glutamate: step 3/4. Functionally, catalyzes the NADPH-dependent reduction of N-acetyl-5-glutamyl phosphate to yield N-acetyl-L-glutamate 5-semialdehyde. The protein is N-acetyl-gamma-glutamyl-phosphate reductase of Bradyrhizobium sp. (strain ORS 278).